The following is a 424-amino-acid chain: UDP-N-acetylglucosamine 1-carboxyvinyltransferase (424 aa).

A phosphoenolpyruvate-binding site is contributed by 22 to 23 (KN). Arg95 lines the UDP-N-acetyl-alpha-D-glucosamine pocket. The Proton donor role is filled by Cys119. The residue at position 119 (Cys119) is a 2-(S-cysteinyl)pyruvic acid O-phosphothioketal. Residues 124 to 128 (RPVDQ), Asp311, and Ile333 contribute to the UDP-N-acetyl-alpha-D-glucosamine site.

The protein belongs to the EPSP synthase family. MurA subfamily.

The protein resides in the cytoplasm. It catalyses the reaction phosphoenolpyruvate + UDP-N-acetyl-alpha-D-glucosamine = UDP-N-acetyl-3-O-(1-carboxyvinyl)-alpha-D-glucosamine + phosphate. It functions in the pathway cell wall biogenesis; peptidoglycan biosynthesis. Functionally, cell wall formation. Adds enolpyruvyl to UDP-N-acetylglucosamine. The protein is UDP-N-acetylglucosamine 1-carboxyvinyltransferase of Polaromonas naphthalenivorans (strain CJ2).